Reading from the N-terminus, the 221-residue chain is Ktr system potassium uptake protein C (221 aa).

In terms of domain architecture, RCK N-terminal spans lysine 2–valine 118. Residues arginine 12, aspartate 32 to aspartate 34, aspartate 52 to serine 53, isoleucine 74 to glutamate 76, lysine 99 to glutamine 101, histidine 105, and glutamate 121 each bind NAD(+). The RCK C-terminal domain maps to asparagine 135–histidine 219.

Belongs to the KtrA potassium transport family. As to quaternary structure, homodimer, tetramer (dimer of homodimer) and octamer (tetramer of homodimer). Part of the KtrCD complex formed by an octameric catalytic ring of KtrC and a membrane associated dimer of KtrD forming a potassium channel.

It localises to the cell membrane. Its function is as follows. Catalytic subunit of the KtrCD potassium uptake transporter. The 2 major potassium transporter complexes KtrAB and KtrCD confer resistance to both suddenly imposed and prolonged osmotic stress. The sequence is that of Ktr system potassium uptake protein C (ktrC) from Bacillus subtilis (strain 168).